We begin with the raw amino-acid sequence, 140 residues long: ATP synthase epsilon chain (140 aa).

It belongs to the ATPase epsilon chain family. In terms of assembly, F-type ATPases have 2 components, CF(1) - the catalytic core - and CF(0) - the membrane proton channel. CF(1) has five subunits: alpha(3), beta(3), gamma(1), delta(1), epsilon(1). CF(0) has three main subunits: a, b and c.

The protein resides in the cell inner membrane. Its function is as follows. Produces ATP from ADP in the presence of a proton gradient across the membrane. This Chromobacterium violaceum (strain ATCC 12472 / DSM 30191 / JCM 1249 / CCUG 213 / NBRC 12614 / NCIMB 9131 / NCTC 9757 / MK) protein is ATP synthase epsilon chain.